Consider the following 427-residue polypeptide: Neuronal pentraxin-2 (427 aa).

A signal peptide spans 1–17; the sequence is MLALLAAGVAFAVVVLA. Residues N144 and N185 are each glycosylated (N-linked (GlcNAc...) asparagine). Residues 219 to 420 form the Pentraxin (PTX) domain; it reads DAFKVSLPFR…GASKWPVETC (202 aa). A disulfide bridge links C249 with C309. N273, E351, Q352, D353, and Q363 together coordinate Ca(2+). N389 carries an N-linked (GlcNAc...) asparagine glycan.

Homooligomer or heterooligomer (probably pentamer) with neuronal pentraxin receptor (NPTXR). Ca(2+) is required as a cofactor. As to expression, testis specific.

The protein localises to the cytoplasmic vesicle. Its subcellular location is the secretory vesicle. The protein resides in the acrosome lumen. Its function is as follows. May be involved in binding, concentrating, and sorting soluble glycoproteins or glycolipids that are destined for the acrosome. The sequence is that of Neuronal pentraxin-2 (NPTX2) from Cavia porcellus (Guinea pig).